The primary structure comprises 249 residues: Kallikrein-7 (249 aa).

The N-terminal stretch at 1–21 is a signal peptide; it reads MGVWLLSLITVLLSLALETAG. A propeptide spans 22-25 (activation peptide); sequence QGER. A serine protease region spans residues 26-246; that stretch reads IIDGYKCKEG…YKRWVMETMK (221 aa). Disulfide bonds link Cys32–Cys161, Cys51–Cys67, Cys133–Cys235, Cys140–Cys207, Cys172–Cys186, and Cys197–Cys222. Active-site charge relay system residues include His66 and Asp108. Residue Ser201 is the Charge relay system of the active site.

This sequence belongs to the peptidase S1 family. Kallikrein subfamily. Expressed in skin and, at lower levels, in lung, kidney, brain, heart and spleen. In skin, expressed in high suprabasal keratinocytes and in the luminal parts of hair follicles. Not detected in liver and skeletal muscle.

It is found in the secreted. The catalysed reaction is Cleavage of proteins with aromatic side chains in the P1 position.. With respect to regulation, inhibited by Zn2+ and Cu2+ at low micromolar concentrations. Inhibited by SERPINA12. In terms of biological role, may catalyze the degradation of intercellular cohesive structures in the cornified layer of the skin in the continuous shedding of cells from the skin surface. Specific for amino acid residues with aromatic side chains in the P1 position. Cleaves insulin A chain at '14-Tyr-|-Gln-15' and insulin B chain at '6-Leu-|-Cys-7', '16-Tyr-|-Leu-17', '25-Phe-|-Tyr-26' and '26-Tyr-|-Thr-27'. Could play a role in the activation of precursors to inflammatory cytokines. The polypeptide is Kallikrein-7 (Klk7) (Mus musculus (Mouse)).